We begin with the raw amino-acid sequence, 246 residues long: Small ribosomal subunit protein uS2 (246 aa).

Belongs to the universal ribosomal protein uS2 family.

This chain is Small ribosomal subunit protein uS2, found in Burkholderia thailandensis (strain ATCC 700388 / DSM 13276 / CCUG 48851 / CIP 106301 / E264).